A 141-amino-acid polypeptide reads, in one-letter code: Galactose-6-phosphate isomerase subunit LacA (141 aa).

It belongs to the LacAB/RpiB family. As to quaternary structure, heteromultimeric protein consisting of LacA and LacB.

It carries out the reaction aldehydo-D-galactose 6-phosphate = keto-D-tagatose 6-phosphate. Its pathway is carbohydrate metabolism; D-galactose 6-phosphate degradation; D-tagatose 6-phosphate from D-galactose 6-phosphate: step 1/1. This Streptococcus pneumoniae (strain P1031) protein is Galactose-6-phosphate isomerase subunit LacA.